A 743-amino-acid polypeptide reads, in one-letter code: Cap-specific mRNA (nucleoside-2'-O-)-methyltransferase 2 (743 aa).

Residues 113–326 (ELCTQAWAKF…LYIVCLDYQA (214 aa)) enclose the Adrift-type SAM-dependent 2'-O-MTase domain. Residue Lys121 is part of the active site. Residues Gly152, Trp171, and Asp239 each coordinate S-adenosyl-L-methionine. The active site involves Asp239. Lys279 serves as the catalytic Proton acceptor.

The protein resides in the nucleus. Its subcellular location is the cytoplasm. The enzyme catalyses a 5'-end (N(7)-methyl 5'-triphosphoguanosine)-(2'-O-methyl-ribonucleoside)-(ribonucleotide) in mRNA + S-adenosyl-L-methionine = a 5'-end (N(7)-methyl 5'-triphosphoguanosine)-(2'-O-methyl-ribonucleoside)-(2'-O-methyl-ribonucleotide) in mRNA + S-adenosyl-L-homocysteine + H(+). Its function is as follows. S-adenosyl-L-methionine-dependent methyltransferase that mediates mRNA cap2 2'-O-ribose methylation to the 5'-cap structure of mRNAs. Methylates the ribose of the second nucleotide of a m(7)GpppG-capped mRNA and small nuclear RNA (snRNA) (cap0) to produce m(7)GpppRmpNm (cap2). The chain is Cap-specific mRNA (nucleoside-2'-O-)-methyltransferase 2 (cmtr2) from Danio rerio (Zebrafish).